We begin with the raw amino-acid sequence, 172 residues long: Cytochrome b6-f complex iron-sulfur subunit (172 aa).

A helical membrane pass occupies residues Leu19–Val39. A Rieske domain is found at Gly61 to Phe161. Positions 107, 109, 125, and 128 each coordinate [2Fe-2S] cluster. Cys112 and Cys127 are joined by a disulfide.

The protein belongs to the Rieske iron-sulfur protein family. In terms of assembly, the 4 large subunits of the cytochrome b6-f complex are cytochrome b6, subunit IV (17 kDa polypeptide, PetD), cytochrome f and the Rieske protein, while the 4 small subunits are PetG, PetL, PetM and PetN. The complex functions as a dimer. The cofactor is [2Fe-2S] cluster.

The protein resides in the cellular thylakoid membrane. It catalyses the reaction 2 oxidized [plastocyanin] + a plastoquinol + 2 H(+)(in) = 2 reduced [plastocyanin] + a plastoquinone + 4 H(+)(out). Its function is as follows. Component of the cytochrome b6-f complex, which mediates electron transfer between photosystem II (PSII) and photosystem I (PSI), cyclic electron flow around PSI, and state transitions. The sequence is that of Cytochrome b6-f complex iron-sulfur subunit from Synechococcus sp. (strain JA-2-3B'a(2-13)) (Cyanobacteria bacterium Yellowstone B-Prime).